The following is a 387-amino-acid chain: Colicin-N (387 aa).

Over residues 1–11 (MGSNGADNAHN) the composition is skewed to polar residues. The interval 1 to 106 (MGSNGADNAH…ITITPDNSKP (106 aa)) is disordered. A compositionally biased stretch (gly residues) spans 14-30 (FGGGKNPGIGNTSGAGS). The span at 31 to 48 (NGSASSNRGNSNGWSWSN) shows a compositional bias: low complexity. Positions 78–87 (GNSGNRGNNG) are enriched in gly residues. The next 2 helical transmembrane spans lie at 325–345 (IIGGVVAGVAISLFGAVLSFL) and 350–370 (LAVTALGVIGIMTISYLSSFI).

The protein belongs to the channel forming colicin family.

It is found in the cell membrane. In terms of biological role, this colicin is a channel-forming colicin. This class of transmembrane toxins depolarize the cytoplasmic membrane, leading to dissipation of cellular energy. Functionally, colicins are polypeptide toxins produced by and active against E.coli and closely related bacteria. In Escherichia coli, this protein is Colicin-N (cna).